Reading from the N-terminus, the 188-residue chain is uncharacterized protein (188 aa).

It is found in the plastid. The protein localises to the cyanelle. This is an uncharacterized protein from Cyanophora paradoxa.